A 310-amino-acid polypeptide reads, in one-letter code: Putative S-adenosyl-L-methionine-dependent methyltransferase MUL_4763 (310 aa).

Residues Asp137 and 166 to 167 (DL) contribute to the S-adenosyl-L-methionine site.

This sequence belongs to the UPF0677 family.

Its function is as follows. Exhibits S-adenosyl-L-methionine-dependent methyltransferase activity. In Mycobacterium ulcerans (strain Agy99), this protein is Putative S-adenosyl-L-methionine-dependent methyltransferase MUL_4763.